The chain runs to 416 residues: Na(+)/H(+) antiporter NhaA (416 aa).

Transmembrane regions (helical) follow at residues 18-38 (VGGAILLVAAAIALLWVNSPW), 59-79 (LTLADWTKDGLLAVFFFVAGL), 97-117 (ALPIIAAVGGVVTPALIAAVI), 127-147 (GWAIPVATDIAFALGVLALTG), 167-187 (LLAIILIAVLFTVGVSLLWLL), 265-285 (GICVPLFALFAAGVPLNATVF), 297-317 (VMLGLLLGKTIGIFGISWVAI), 333-353 (MFALSVLGAIGFTVSLLVAEL), and 363-383 (LAKAAVLITSLAASLAGSALL). The tract at residues 396-416 (ALELQPDEGDASDPSEGGSLR) is disordered.

It belongs to the NhaA Na(+)/H(+) (TC 2.A.33) antiporter family.

It localises to the cell membrane. It carries out the reaction Na(+)(in) + 2 H(+)(out) = Na(+)(out) + 2 H(+)(in). Na(+)/H(+) antiporter that extrudes sodium in exchange for external protons. This Nocardia farcinica (strain IFM 10152) protein is Na(+)/H(+) antiporter NhaA.